A 242-amino-acid chain; its full sequence is Probable transcriptional regulatory protein Csac_0964 (242 aa).

Residues 1-20 (MSGHSKWANIRHKKEKTDAQ) are disordered.

The protein belongs to the TACO1 family.

It is found in the cytoplasm. The protein is Probable transcriptional regulatory protein Csac_0964 of Caldicellulosiruptor saccharolyticus (strain ATCC 43494 / DSM 8903 / Tp8T 6331).